Reading from the N-terminus, the 437-residue chain is Sodium/bile acid cotransporter 4 (437 aa).

Topologically, residues 1 to 103 (MDSLDNTTLL…PPFWDTPLNH (103 aa)) are extracellular. 2 N-linked (GlcNAc...) asparagine glycosylation sites follow: asparagine 6 and asparagine 20. The tract at residues 15 to 79 (SLLPDNLTLS…SSSLTVGVAG (65 aa)) is disordered. The span at 22-41 (TLSPNAGSPSASTLSPLAVT) shows a compositional bias: polar residues. Over residues 42 to 74 (SSPGPGLSLAPSPSIGFSPEATPTPEPTSSSLT) the composition is skewed to low complexity. The helical transmembrane segment at 104–124 (GLNVFVGAALCITMLGLGCTV) threads the bilayer. Residues 125 to 140 (DVNHFGAHVRRPVGAL) lie on the Cytoplasmic side of the membrane. Residues 141-161 (LAALCQFGFLPLLAFLLALIF) form a helical membrane-spanning segment. At 162 to 197 (KLDEVAAVAVLLCGCCPGGNLSNLMSLLVDGDMNLS) the chain is on the extracellular side. N-linked (GlcNAc...) asparagine glycosylation is found at asparagine 181 and asparagine 195. The chain crosses the membrane as a helical span at residues 198 to 218 (IIMTISSTLLALVLMPLCLWI). At 219–233 (YSRAWINTPLVQLLP) the chain is on the cytoplasmic side. A helical membrane pass occupies residues 234-254 (LGAVTLTLCSTLIPIGLGVFI). The Extracellular segment spans residues 255–267 (RYKYNRVADYIVK). The helical transmembrane segment at 268-288 (VSLWSLLVTLVVLFIMTGTML) threads the bilayer. At 289-291 (GPE) the chain is on the cytoplasmic side. A helical transmembrane segment spans residues 292–312 (LLASIPATVYVVAIFMPLAGY). Residues 313–360 (ASGYGLATLFHLPPNCKRTVCLETGSQNVQLCTAILKLAFPPRFIGSM) lie on the Extracellular side of the membrane. A helical membrane pass occupies residues 361-381 (YMFPLLYALFQSAEAGVFVLI). At 382–437 (YKMYGSEILHKREALDEDEDTDISYKKLKEEEMADTSYGTVGTDDLVMMETTQTAL) the chain is on the cytoplasmic side.

The protein belongs to the bile acid:sodium symporter (BASS) (TC 2.A.28) family. In terms of processing, activated following N-terminal proteolytic cleavage by thrombin and/or proteases. In terms of tissue distribution, highest expression in the brain and significantly above background levels in the eye, prostate, and whole embryo tissue preparations.

It localises to the cell membrane. Transporter for bile acids. The polypeptide is Sodium/bile acid cotransporter 4 (Slc10a4) (Mus musculus (Mouse)).